A 156-amino-acid chain; its full sequence is Prolamin PPROL 17D (156 aa).

A signal peptide spans 1–19 (MKIIFFFALLAIAACSASA). A Pyrrolidone carboxylic acid modification is found at glutamine 20.

The protein belongs to the prolamin family.

The protein localises to the vacuole. It is found in the aleurone grain. Its function is as follows. Seed storage protein; serves as a source of nitrogen, carbon and sulfur for the young developing seedling. The protein is Prolamin PPROL 17D of Oryza sativa subsp. japonica (Rice).